The primary structure comprises 118 residues: MGIMSKILGGGGSRTTEDYVELDLDDFDTARGDAGLSVHIAEIGGQQDVIAIKDAVYDGNLVIADITRHTTSDSTMEHIIDDLRQVAREVDGDIVQKGDDQIVITPTGISISRQKLNG.

The important for localization in a ring-like structure at midcell stretch occupies residues 1–12; sequence MGIMSKILGGGG.

In terms of assembly, homodimer. Does not oligomerize. Interacts with FtsZ2.

It localises to the cytoplasm. In terms of biological role, involved in cell division. Probably acts as a membrane anchor for FstZ2, tethering its filaments to the division site. May be involved in septum closure. This is Cell division protein SepF from Haloferax volcanii (strain ATCC 29605 / DSM 3757 / JCM 8879 / NBRC 14742 / NCIMB 2012 / VKM B-1768 / DS2) (Halobacterium volcanii).